Here is a 229-residue protein sequence, read N- to C-terminus: Demethylmenaquinone methyltransferase (229 aa).

Residues threonine 62, aspartate 80, 100-101, and serine 117 contribute to the S-adenosyl-L-methionine site; that span reads DG.

The protein belongs to the class I-like SAM-binding methyltransferase superfamily. MenG/UbiE family.

The enzyme catalyses a 2-demethylmenaquinol + S-adenosyl-L-methionine = a menaquinol + S-adenosyl-L-homocysteine + H(+). It participates in quinol/quinone metabolism; menaquinone biosynthesis; menaquinol from 1,4-dihydroxy-2-naphthoate: step 2/2. Its function is as follows. Methyltransferase required for the conversion of demethylmenaquinol (DMKH2) to menaquinol (MKH2). The chain is Demethylmenaquinone methyltransferase from Corynebacterium kroppenstedtii (strain DSM 44385 / JCM 11950 / CIP 105744 / CCUG 35717).